Reading from the N-terminus, the 418-residue chain is Bile acid-CoA:amino acid N-acyltransferase (418 aa).

Phosphoserine is present on serine 125. Residues cysteine 235, aspartate 328, and histidine 362 each act as charge relay system in the active site. Serine 416 carries the post-translational modification Phosphoserine.

Belongs to the C/M/P thioester hydrolase family. As to quaternary structure, monomer. Expressed in the gallbladder mucosa and pancreas. Expressed in hepatocytes (at protein level).

It localises to the cytoplasm. Its subcellular location is the cytosol. It is found in the peroxisome. The catalysed reaction is choloyl-CoA + glycine = glycocholate + CoA + H(+). It carries out the reaction hexadecanoyl-CoA + H2O = hexadecanoate + CoA + H(+). It catalyses the reaction choloyl-CoA + H2O = cholate + CoA + H(+). The enzyme catalyses chenodeoxycholoyl-CoA + H2O = chenodeoxycholate + CoA + H(+). The catalysed reaction is eicosanoyl-CoA + H2O = eicosanoate + CoA + H(+). It carries out the reaction octadecanoyl-CoA + H2O = octadecanoate + CoA + H(+). It catalyses the reaction docosanoyl-CoA + H2O = docosanoate + CoA + H(+). The enzyme catalyses tetracosanoyl-CoA + H2O = tetracosanoate + CoA + H(+). The catalysed reaction is hexacosanoyl-CoA + H2O = hexacosanoate + CoA + H(+). It carries out the reaction dodecanoyl-CoA + H2O = dodecanoate + CoA + H(+). It catalyses the reaction tetradecanoyl-CoA + H2O = tetradecanoate + CoA + H(+). The enzyme catalyses choloyl-CoA + taurine = taurocholate + CoA + H(+). The catalysed reaction is chenodeoxycholoyl-CoA + glycine = glycochenodeoxycholate + CoA + H(+). It carries out the reaction chenodeoxycholoyl-CoA + taurine = taurochenodeoxycholate + CoA + H(+). It catalyses the reaction eicosanoyl-CoA + glycine = N-eicosanoylglycinate + CoA + H(+). The enzyme catalyses hexacosanoyl-CoA + glycine = N-hexacosanoylglycine + CoA + H(+). The catalysed reaction is docosanoyl-CoA + glycine = N-docosanoylglycine + CoA + H(+). In terms of biological role, catalyzes the amidation of bile acids (BAs) with the amino acids taurine and glycine. More than 95% of the BAs are N-acyl amidates with glycine and taurine. Amidation of BAs in the liver with glycine or taurine prior to their excretion into bile is an important biochemical event in bile acid metabolism. This conjugation (or amidation) plays several important biological roles in that it promotes the secretion of BAs and cholesterol into bile and increases the detergent properties of BAs in the intestine, which facilitates lipid and vitamin absorption. May also act as an acyl-CoA thioesterase that regulates intracellular levels of free fatty acids. In vitro, catalyzes the hydrolysis of long- and very long-chain saturated acyl-CoAs to the free fatty acid and coenzyme A (CoASH), and conjugates glycine to these acyl-CoAs. In Homo sapiens (Human), this protein is Bile acid-CoA:amino acid N-acyltransferase (BAAT).